The sequence spans 2408 residues: Protein ELYS (2408 aa).

The tract at residues 1–492 (MQNLEAQVTG…SGLIHFACTG (492 aa)) is seven-bladed beta propeller repeats. Residues 1016 to 2408 (YSLPSLVWRE…AKPVTRRKMR (1393 aa)) are disordered. Residues 1124 to 1145 (PLTSSDTDNNQTPHKSPLLKTS) are compositionally biased toward polar residues. Residues 1457–1466 (NDQDSEEIEE) show a composition bias toward acidic residues. 2 stretches are compositionally biased toward polar residues: residues 1705–1719 (INEG…QSTL) and 1735–1750 (PADS…TLPT). Residues 2136-2149 (QASKIQEDLSDTPR) are compositionally biased toward basic and acidic residues. Sufficient for chromatin-binding stretches follow at residues 2281 to 2359 (STQY…PVEI) and 2359 to 2408 (IKLI…RKMR). The interval 2281–2408 (STQYVFSPPS…AKPVTRRKMR (128 aa)) is sufficient to block nuclear pore assembly. A DNA-binding region (a.T hook) is located at residues 2329–2341 (SKPRGRPPKHKAK). Over residues 2331–2348 (PRGRPPKHKAKAVTRVLK) the composition is skewed to basic residues. The span at 2378–2389 (DSTEAKGAEKIS) shows a compositional bias: basic and acidic residues.

The protein belongs to the ELYS family. In terms of assembly, interacts with the Nup107-160 subcomplex of the NPC.

Its subcellular location is the nucleus. It is found in the nuclear pore complex. The protein resides in the cytoplasm. The protein localises to the nucleoplasm. In terms of biological role, required for the assembly of a functional nuclear pore complex (NPC) on the surface of chromosomes as nuclei form at the end of mitosis. May initiate NPC assembly by binding to chromatin and recruiting the Nup107-160 subcomplex, which may in turn recruit membrane vesicles containing pom121 and tmem48/ndc1. Association with chromatin may require the presence of the mcm2-mcm7 complex, suggesting a mechanism for coordination of nuclear assembly and the inactivation of replication licensing. In Xenopus laevis (African clawed frog), this protein is Protein ELYS (ahctf1).